Reading from the N-terminus, the 320-residue chain is Phospho-N-acetylmuramoyl-pentapeptide-transferase (320 aa).

10 consecutive transmembrane segments (helical) span residues 7-27, 50-70, 77-97, 113-133, 148-168, 173-193, 198-216, 221-241, 247-267, and 297-317; these read ILAI…VIPF, GTPT…SLIF, IGAP…DDFI, LVLQ…HLGS, WAYV…VNLT, GLAS…SIFS, MAIF…LRYN, VVFM…AIAV, VLVL…MLQV, and VVVV…AMIQ.

The protein belongs to the glycosyltransferase 4 family. MraY subfamily. Requires Mg(2+) as cofactor.

The protein resides in the cell membrane. It catalyses the reaction UDP-N-acetyl-alpha-D-muramoyl-L-alanyl-gamma-D-glutamyl-meso-2,6-diaminopimeloyl-D-alanyl-D-alanine + di-trans,octa-cis-undecaprenyl phosphate = di-trans,octa-cis-undecaprenyl diphospho-N-acetyl-alpha-D-muramoyl-L-alanyl-D-glutamyl-meso-2,6-diaminopimeloyl-D-alanyl-D-alanine + UMP. Its pathway is cell wall biogenesis; peptidoglycan biosynthesis. Functionally, catalyzes the initial step of the lipid cycle reactions in the biosynthesis of the cell wall peptidoglycan: transfers peptidoglycan precursor phospho-MurNAc-pentapeptide from UDP-MurNAc-pentapeptide onto the lipid carrier undecaprenyl phosphate, yielding undecaprenyl-pyrophosphoryl-MurNAc-pentapeptide, known as lipid I. This chain is Phospho-N-acetylmuramoyl-pentapeptide-transferase, found in Caldicellulosiruptor bescii (strain ATCC BAA-1888 / DSM 6725 / KCTC 15123 / Z-1320) (Anaerocellum thermophilum).